Here is a 166-residue protein sequence, read N- to C-terminus: Ribosome maturation factor RimM (166 aa).

Residues 95–164 (EEEYYAYELV…KKIIVKEELL (70 aa)) form the PRC barrel domain.

This sequence belongs to the RimM family. Binds ribosomal protein uS19.

The protein localises to the cytoplasm. Its function is as follows. An accessory protein needed during the final step in the assembly of 30S ribosomal subunit, possibly for assembly of the head region. Essential for efficient processing of 16S rRNA. May be needed both before and after RbfA during the maturation of 16S rRNA. It has affinity for free ribosomal 30S subunits but not for 70S ribosomes. This Aquifex aeolicus (strain VF5) protein is Ribosome maturation factor RimM.